The sequence spans 1680 residues: Sodium channel protein type 7 subunit alpha (1680 aa).

The Cytoplasmic segment spans residues 1–117; the sequence is MLTSPEPKGL…RRAVIKVLVH (117 aa). One copy of the I repeat lies at 100–401; the sequence is TLSPLSSLRR…ILTMAYEQEK (302 aa). The chain crosses the membrane as a helical span at residues 118-137; sequence PLFRLLILISVLTDSILMCM. The Extracellular segment spans residues 138–141; the sequence is SNLP. A helical membrane pass occupies residues 142–167; sequence EWILAVENTLLGIYTFEILVKVIARG. Over 168–178 the chain is Cytoplasmic; sequence IWAGSFSFLGD. A helical transmembrane segment spans residues 179 to 196; it reads LWNWLDFSVTLFELITRS. At 197 to 200 the chain is on the extracellular side; it reads SPLS. The helical transmembrane segment at 201 to 219 threads the bilayer; that stretch reads SLPMFKTIRTLRILKIIPL. The Cytoplasmic segment spans residues 220-237; it reads NHGLQSIVVTLVQCLKKL. Residues 238 to 259 form a helical membrane-spanning segment; the sequence is LGAIALALFFLTVSSLFGMGLF. Topologically, residues 260-338 are extracellular; that stretch reads MGNLKHKCVR…PDNGFTSFDN (79 aa). C267 and C307 are disulfide-bonded. N281 and N309 each carry an N-linked (GlcNAc...) asparagine glycan. An intramembrane region (pore-forming) is located at residues 339 to 366; it reads FGWALLAMFRLMTQDYPELLYHQILYAS. Residue G367 is a topological domain, extracellular. Residues 368–407 form a helical membrane-spanning segment; the sequence is KIYMIFFVLISFWFAFYMASLFLGILTMAYEQEKQRASEE. The Cytoplasmic segment spans residues 408–505; it reads SRDMDSKCHQ…EFADRIITHP (98 aa). An II repeat occupies 487 to 756; sequence CSPCWIKLNE…QLAVAWIKMV (270 aa). Residues 506 to 521 traverse the membrane as a helical segment; sequence LFDLFLVICIILNICF. Over 522 to 530 the chain is Extracellular; the sequence is LALEHFPMS. A helical membrane pass occupies residues 531–559; sequence EELMSLLAIGNLVFIGIYTIEMILKIIAM. Residues 560 to 568 are Cytoplasmic-facing; the sequence is HPYGYFQIS. Residues 569 to 586 traverse the membrane as a helical segment; sequence WHIFDSILVVLGLTEMLL. The Extracellular portion of the chain corresponds to 587-592; it reads ADIEEI. Residues 593–608 form a helical membrane-spanning segment; the sequence is TVFILVPLIFIKLGKY. Residues 609 to 625 lie on the Cytoplasmic side of the membrane; it reads APPFKNLMRILGRALVA. Residues 626-654 form a helical membrane-spanning segment; the sequence is LKDLVLLVSIFIYFSAVFGMKLFGRSYKD. Topologically, residues 655-672 are extracellular; sequence CVCHVDQDCQRQRWHMSD. 2 disulfides stabilise this stretch: C657/C663 and C695/C704. Positions 673–699 form an intramembrane region, pore-forming; the sequence is FLHAYVTVFRILCGEWIETLWECMEVA. A topological domain (extracellular) is located at residue G700. Residues 701–731 form a helical membrane-spanning segment; that stretch reads EAWCIPFYMMVILIGNLLILYLFVALVSSFA. Residues 732 to 933 are Cytoplasmic-facing; the sequence is SYDATTEVSK…KTCCKIVENS (202 aa). Over residues 807–833 the composition is skewed to polar residues; that stretch reads DQSSGTEKTPVTESESQSLIASPSVSE. The disordered stretch occupies residues 807 to 874; it reads DQSSGTEKTP…MKQSSSSECS (68 aa). S842 carries the phosphoserine modification. An III repeat occupies 915–1223; that stretch reads NGKIWRNIRK…KKQYRALKKL (309 aa). Residues 934–952 form a helical membrane-spanning segment; that stretch reads WFECFIGLVTLLCTGTLAL. Residues 953-960 lie on the Extracellular side of the membrane; that stretch reads EDIYIDQR. A helical transmembrane segment spans residues 961–989; that stretch reads KTIKIFLEYGDMIFAYIFILEMLLKWVAY. The Cytoplasmic portion of the chain corresponds to 990-997; it reads GFKAYFSN. Residues 998 to 1019 form a helical membrane-spanning segment; that stretch reads NWYKLDFMVVIVLCLSLIGKTR. Position 1020 (E1020) is a topological domain, extracellular. A helical transmembrane segment spans residues 1021 to 1039; that stretch reads DLNPLASIKFLRALRVLSQ. Topologically, residues 1040–1054 are cytoplasmic; that stretch reads FERMKVVLRALIKTT. Residues 1055–1079 traverse the membrane as a helical segment; it reads LPAVSVFLVCLMIWLLFSVMGVFLF. Residues 1080–1126 lie on the Extracellular side of the membrane; that stretch reads AGKFYECIDPTRGERFSVFEVMNKSQCENLVFNESMPWENAKLNFDN. C1086 and C1106 are oxidised to a cystine. Residues N1102 and N1112 are each glycosylated (N-linked (GlcNAc...) asparagine). Positions 1127-1153 form an intramembrane region, pore-forming; sequence VGNGFLSLFQVATFNGWISIMNSAIDS. Residues 1154 to 1166 lie on the Extracellular side of the membrane; that stretch reads VGVYMQPSFEHSL. The helical transmembrane segment at 1167–1201 threads the bilayer; the sequence is HMYTYFIIFVVFGLFLPLCMLIGVIIRNFNKQKIK. The Cytoplasmic segment spans residues 1202-1249; it reads QGGSNIFITVKQKKQYRALKKLLYADSQKPAARPRNKFQGFICDVVTH. Residues 1232–1530 form an IV repeat; sequence AARPRNKFQG…WNRFDPDRTQ (299 aa). A helical transmembrane segment spans residues 1250–1271; that stretch reads RVFNVIIILLICFQATTIMIQN. The Extracellular portion of the chain corresponds to 1272–1275; it reads DEQS. The helical transmembrane segment at 1276–1304 threads the bilayer; the sequence is PQIETAVFWMNSLFTMLFTLECILKLTAF. The Cytoplasmic portion of the chain corresponds to 1305-1311; that stretch reads RCHYFTS. Residues 1312-1337 traverse the membrane as a helical segment; sequence AWNVHDFMVVVFSITGLLLPLSIGQY. Residues 1338 to 1340 lie on the Extracellular side of the membrane; the sequence is FVP. A helical membrane pass occupies residues 1341-1361; the sequence is PSLVQLLLLSRIIHVLRPGKG. The Cytoplasmic portion of the chain corresponds to 1362 to 1376; the sequence is PKVFHDLMLPLMLSL. A helical membrane pass occupies residues 1377–1401; it reads PALLNIALLIFLVMFIYAIFGMYNF. Over 1402-1419 the chain is Extracellular; the sequence is AYVKKEAGINDVSNFETF. Positions 1420-1443 form an intramembrane region, pore-forming; the sequence is GSSMLCLFQVTTFSGWDGMLDAIF. The Extracellular segment spans residues 1444–1467; it reads NSQWSDCDPDKINPGTQVRGDCGS. C1450 and C1465 are disulfide-bonded. Residues 1468–1503 traverse the membrane as a helical segment; sequence PSVGIFYFVSYILISWLIIVNMYVVLIMEFLSIPSK. Residues 1504–1680 lie on the Cytoplasmic side of the membrane; sequence RKNRTLSEDD…EEKASIQTQI (177 aa). The interval 1646-1680 is disordered; sequence KIQDIPEIDDGREDPNSKGVHSGQIEEKASIQTQI.

The protein belongs to the sodium channel (TC 1.A.1.10) family. SCN7A subfamily. In terms of assembly, the sodium channel formed by SCN7A is probably a heterooligomeric complex consisting of the ion conducting pore forming alpha subunit SCN7A and regulatory beta subunits such as SCN3B. Interacts with ATP1A1; activates ATP1A1 and thereby indirectly signals to nearby neurons to regulate sodium homeostasis. As to expression, not tissue specific but widely expressed.

It is found in the cell membrane. It carries out the reaction Na(+)(in) = Na(+)(out). Sodium leak channel functioning as an osmosensor regulating sodium ion levels in various tissues and organs. While most sodium channels are voltage-gated, SCN7A is not and lets sodium flow through membrane along its concentration gradient. In glial cells of the central nervous system, senses body-fluid sodium levels and controls salt intake behavior as well as voluntary water intake through activation of nearby neurons to maintain appropriate sodium levels in the body. By mediating sodium influx into keratinocytes, also plays a role in skin barrier homeostasis. This chain is Sodium channel protein type 7 subunit alpha, found in Rattus norvegicus (Rat).